The primary structure comprises 1840 residues: Sodium channel protein type 4 subunit alpha (1840 aa).

The Cytoplasmic portion of the chain corresponds to 1–131 (MASSSLPNLV…RVAIKVLIHA (131 aa)). Residues 36–60 (EARLQRNKQMEIEEPERKPRSDLEA) are compositionally biased toward basic and acidic residues. The segment at 36–63 (EARLQRNKQMEIEEPERKPRSDLEAGKN) is disordered. An I repeat occupies 113-448 (LLSPFSIVRR…VVAMAYAEQN (336 aa)). Residues 132–150 (LFSMFIMITILTNCVFMTM) form a helical membrane-spanning segment. Residues 151 to 157 (SNPPSWS) are Extracellular-facing. Residues 158–178 (KHVEYTFTGIYTFESLIKMLA) traverse the membrane as a helical segment. At 179 to 192 (RGFCIDDFTFLRDP) the chain is on the cytoplasmic side. A helical membrane pass occupies residues 193 to 210 (WNWLDFSVITMAYVTEFV). Topologically, residues 211–216 (DLGNIS) are extracellular. Residues 217–233 (ALRTFRVLRALKTITVI) traverse the membrane as a helical segment. The Cytoplasmic portion of the chain corresponds to 234–252 (PGLKTIVGALIQSVKKLSD). The helical transmembrane segment at 253 to 272 (VMILTVFCLSVFALVGLQLF) threads the bilayer. Residues 273–385 (MGNLRQKCVR…PNYGYTSYDT (113 aa)) lie on the Extracellular side of the membrane. Residues C280 and C354 are joined by a disulfide bond. N-linked (GlcNAc...) asparagine glycosylation is found at N288, N291, N297, N303, N309, N315, N327, and N356. The cysteines at positions 363 and 369 are disulfide-linked. The pore-forming intramembrane region spans 386–410 (FSWAFLALFRLMTQDYWENLFQLTL). The Extracellular portion of the chain corresponds to 411–417 (RAAGKTY). A helical transmembrane segment spans residues 418–438 (MIFFVVIIFLGSFYLINLILA). Over 439 to 572 (VVAMAYAEQN…HIIYLIVMDP (134 aa)) the chain is Cytoplasmic. A disordered region spans residues 481-522 (AAQALESGEEADGDPTHNKDCNGSLDASGEKGPPRPSCSADS). S487 bears the Phosphoserine mark. Residues 554 to 826 (CCAPWVKFKH…QIAIGRIKWG (273 aa)) form an II repeat. A helical membrane pass occupies residues 573 to 591 (FVDLGITICIVLNTLFMAM). Residues 592–602 (EHYPMTEHFDN) are Extracellular-facing. Residues 603–622 (VLSVGNLVFTGIFTAEMVLK) form a helical membrane-spanning segment. Over 623–636 (LIAMDPYEYFQQGW) the chain is Cytoplasmic. Residues 637–656 (NIFDSFIVTLSLVELGLANV) traverse the membrane as a helical segment. The Extracellular segment spans residues 657 to 658 (QG). The chain crosses the membrane as a helical span at residues 659–676 (LSVLRSFRLLRVFKLAKS). Residues 677–692 (WPTLNMLIKIIGNSVG) are Cytoplasmic-facing. The chain crosses the membrane as a helical span at residues 693-711 (ALGNLTLVLAIIVFIFAVV). Over 712–740 (GMQLFGKSYKECVCKIASDCNLPRWHMND) the chain is Extracellular. An intrachain disulfide couples C725 to C731. The pore-forming intramembrane region spans 741 to 761 (FFHSFLIVFRILCGEWIETMW). At 762–772 (DCMEVAGQAMC) the chain is on the extracellular side. Residues C763 and C772 are joined by a disulfide bond. Residues 773–791 (LTVFLMVMVIGNLVVLNLF) form a helical membrane-spanning segment. Residues 792–1025 (LALLLSSFSA…ACFKIVEHNW (234 aa)) are Cytoplasmic-facing. Disordered regions lie at residues 854-884 (EPGG…LKDN) and 925-983 (DLEM…GEQP). Basic and acidic residues predominate over residues 868-884 (EDEKKEPPPEDKELKDN). Composition is skewed to acidic residues over residues 925–940 (DLEM…FSEP) and 968–983 (EDPE…GEQP). The stretch at 1006–1319 (RGKMWWTLRR…KKYYNAMKKL (314 aa)) is one III repeat. Residues 1026–1043 (FETFIVFMILLSSGALAF) form a helical membrane-spanning segment. Residues 1044–1056 (EDIYIEQRRVIRT) are Extracellular-facing. Residues 1057–1075 (ILEYADKVFTYIFILEMLL) traverse the membrane as a helical segment. The Cytoplasmic segment spans residues 1076-1089 (KWVAYGFKVYFTNA). A helical transmembrane segment spans residues 1090–1108 (WCWLDFLIVDVSIISLVAN). Topologically, residues 1109–1116 (WLGYSELG) are extracellular. The chain crosses the membrane as a helical span at residues 1117-1135 (PIKSLRTLRALRPLRALSR). Residues 1136–1152 (FEGMRVVVNALLGAIPS) lie on the Cytoplasmic side of the membrane. A helical transmembrane segment spans residues 1153 to 1172 (IMNVLLVCLIFWLIFSIMGV). The Extracellular portion of the chain corresponds to 1173–1223 (NLFAGKFYYCVNTTTSERFDISVVNNKSESESLMYTGQVRWMNVKVNYDNV). N-linked (GlcNAc...) asparagine glycosylation is present at N1198. Positions 1224-1245 (GLGYLSLLQVATFKGWMDIMYA) form an intramembrane region, pore-forming. Over 1246–1262 (AVDSREKEEQPHYEVNL) the chain is Extracellular. Residues 1263–1284 (YMYLYFVIFIIFGSFFTLNLFI) traverse the membrane as a helical segment. Residues 1285–1347 (GVIIDNFNQQ…MVYDFVTKQV (63 aa)) lie on the Cytoplasmic side of the membrane. Positions 1303–1305 (IFM) are important for rapid channel inactivation. One copy of the IV repeat lies at 1328–1626 (IPRPQNKIQG…WEKFDPDATQ (299 aa)). The helical transmembrane segment at 1348 to 1365 (FDISIMILICLNMVTMMV) threads the bilayer. Over 1366 to 1376 (ETDDQSQLKVD) the chain is Extracellular. A helical transmembrane segment spans residues 1377 to 1395 (ILYNINMVFIIIFTGECVL). The Cytoplasmic segment spans residues 1396–1407 (KMFALRHYYFTI). The chain crosses the membrane as a helical span at residues 1408–1425 (GWNIFDFVVVILSIVGLA). Residues 1426–1438 (LSDLIQKYFVSPT) are Extracellular-facing. Residues 1439-1455 (LFRVIRLARIGRVLRLI) traverse the membrane as a helical segment. The Cytoplasmic portion of the chain corresponds to 1456–1474 (RGAKGIRTLLFALMMSLPA). Residues 1475–1492 (LFNIGLLLFLVMFIYSIF) form a helical membrane-spanning segment. Over 1493 to 1514 (GMSNFAYVKKESGIDDMFNFET) the chain is Extracellular. The pore-forming intramembrane region spans 1515-1537 (FGNSIICLFEITTSAGWDGLLNP). Over 1538 to 1567 (ILNSGPPDCDPTLENPGTNVRGDCGNPSIG) the chain is Extracellular. A disulfide bridge links C1546 with C1561. The helical transmembrane segment at 1568–1590 (ICFFCSYIIISFLIVVNMYIAII) threads the bilayer. Residues 1591-1840 (LENFNVATEE…VRPGVKESLV (250 aa)) lie on the Cytoplasmic side of the membrane. The IQ domain occupies 1720 to 1749 (EEVCAIKIQRAYRRHLLQRSVKQASYMYRH). The segment at 1775–1840 (HEKEGDGVQS…VRPGVKESLV (66 aa)) is disordered. Residues 1804-1813 (PTSSSDTALT) show a composition bias toward low complexity. Pro residues predominate over residues 1814 to 1824 (PSPPPLPPSSS).

The protein belongs to the sodium channel (TC 1.A.1.10) family. Nav1.4/SCN4A subfamily. In terms of assembly, the Nav1.4 voltage-gated sodium channel consists of an ion-conducting alpha subunit SCN4A which is functional on its own and a regulatory beta subunit SCN1B. SCN1B strongly enhances the presence of SCN4A at the cell surface. SCN1B is also required for rapid channel inactivation and recovery after inactivation. It prevents the decrease of channel activity in response to repetitive, high-frequency depolarizations. Interacts with the syntrophins SNTA1, SNTB1 and SNTB2 (via PDZ domain); probably links SCN4A to the actin cytoskeleton and the extracellular matrix via the dystrophin-associated protein complex and regulates its localization in muscle cells. Interacts with TMEM233; probable regulator of the channel. Detected in skeletal muscle.

The protein resides in the cell membrane. The catalysed reaction is Na(+)(in) = Na(+)(out). Potently inhibited by tetrodotoxin and saxitoxin. Inhibited by the conotoxin GVIIJ. Pore-forming subunit of Nav1.4, a voltage-gated sodium (Nav) channel that directly mediates the depolarizing phase of action potentials in excitable membranes. Navs, also called VGSCs (voltage-gated sodium channels) or VDSCs (voltage-dependent sodium channels), operate by switching between closed and open conformations depending on the voltage difference across the membrane. In the open conformation they allow Na(+) ions to selectively pass through the pore, along their electrochemical gradient. The influx of Na+ ions provokes membrane depolarization, initiating the propagation of electrical signals throughout cells and tissues. Highly expressed in skeletal muscles, Nav1.4 generates the action potential crucial for muscle contraction. The sequence is that of Sodium channel protein type 4 subunit alpha from Rattus norvegicus (Rat).